A 421-amino-acid chain; its full sequence is Imidazolonepropionase (421 aa).

2 residues coordinate Fe(3+): His81 and His83. The Zn(2+) site is built by His81 and His83. Arg90, Tyr153, and His186 together coordinate 4-imidazolone-5-propanoate. N-formimidoyl-L-glutamate is bound at residue Tyr153. Position 251 (His251) interacts with Fe(3+). A Zn(2+)-binding site is contributed by His251. Glu254 contacts 4-imidazolone-5-propanoate. Residue Asp326 coordinates Fe(3+). Asp326 serves as a coordination point for Zn(2+). Positions 328 and 330 each coordinate N-formimidoyl-L-glutamate. Ser331 contributes to the 4-imidazolone-5-propanoate binding site.

This sequence belongs to the metallo-dependent hydrolases superfamily. HutI family. Zn(2+) serves as cofactor. It depends on Fe(3+) as a cofactor.

The protein localises to the cytoplasm. The enzyme catalyses 4-imidazolone-5-propanoate + H2O = N-formimidoyl-L-glutamate. It functions in the pathway amino-acid degradation; L-histidine degradation into L-glutamate; N-formimidoyl-L-glutamate from L-histidine: step 3/3. Catalyzes the hydrolytic cleavage of the carbon-nitrogen bond in imidazolone-5-propanoate to yield N-formimidoyl-L-glutamate. It is the third step in the universal histidine degradation pathway. This is Imidazolonepropionase from Streptococcus pyogenes serotype M28 (strain MGAS6180).